Here is a 95-residue protein sequence, read N- to C-terminus: Small ribosomal subunit protein uS19 (95 aa).

The tract at residues 73 to 95 (EFSPTRTYRGHGADKNAKGSKKK) is disordered.

This sequence belongs to the universal ribosomal protein uS19 family.

In terms of biological role, protein S19 forms a complex with S13 that binds strongly to the 16S ribosomal RNA. The protein is Small ribosomal subunit protein uS19 of Deinococcus geothermalis (strain DSM 11300 / CIP 105573 / AG-3a).